Consider the following 337-residue polypeptide: Receptor like protein kinase S.3 (337 aa).

The 267-residue stretch at 50-316 folds into the Protein kinase domain; the sequence is FKESELFGTE…VNYLEGNDVL (267 aa). ATP contacts are provided by residues 56–64 and Lys-78; that span reads FGTEANGTV. Tyr-123 carries the post-translational modification Phosphotyrosine. Asp-171 (proton acceptor) is an active-site residue.

It belongs to the protein kinase superfamily. Ser/Thr protein kinase family.

The catalysed reaction is L-seryl-[protein] + ATP = O-phospho-L-seryl-[protein] + ADP + H(+). The enzyme catalyses L-threonyl-[protein] + ATP = O-phospho-L-threonyl-[protein] + ADP + H(+). The protein is Receptor like protein kinase S.3 (LECRKS3) of Arabidopsis thaliana (Mouse-ear cress).